The primary structure comprises 486 residues: UDP-N-acetylmuramoyl-L-alanyl-D-glutamate--2,6-diaminopimelate ligase (486 aa).

Ser-30 contributes to the UDP-N-acetyl-alpha-D-muramoyl-L-alanyl-D-glutamate binding site. Residue 111 to 117 coordinates ATP; it reads GTNGKTT. UDP-N-acetyl-alpha-D-muramoyl-L-alanyl-D-glutamate contacts are provided by residues 153–154, Ser-180, Gln-186, and Arg-188; that span reads TT. The residue at position 220 (Lys-220) is an N6-carboxylysine. Meso-2,6-diaminopimelate is bound by residues Arg-378, 402-405, Gly-455, and Glu-459; that span reads DNPR. Positions 402–405 match the Meso-diaminopimelate recognition motif motif; sequence DNPR.

The protein belongs to the MurCDEF family. MurE subfamily. The cofactor is Mg(2+). Carboxylation is probably crucial for Mg(2+) binding and, consequently, for the gamma-phosphate positioning of ATP.

The protein localises to the cytoplasm. It carries out the reaction UDP-N-acetyl-alpha-D-muramoyl-L-alanyl-D-glutamate + meso-2,6-diaminopimelate + ATP = UDP-N-acetyl-alpha-D-muramoyl-L-alanyl-gamma-D-glutamyl-meso-2,6-diaminopimelate + ADP + phosphate + H(+). The protein operates within cell wall biogenesis; peptidoglycan biosynthesis. Functionally, catalyzes the addition of meso-diaminopimelic acid to the nucleotide precursor UDP-N-acetylmuramoyl-L-alanyl-D-glutamate (UMAG) in the biosynthesis of bacterial cell-wall peptidoglycan. This chain is UDP-N-acetylmuramoyl-L-alanyl-D-glutamate--2,6-diaminopimelate ligase, found in Parabacteroides distasonis (strain ATCC 8503 / DSM 20701 / CIP 104284 / JCM 5825 / NCTC 11152).